The primary structure comprises 299 residues: ATP phosphoribosyltransferase (299 aa).

This sequence belongs to the ATP phosphoribosyltransferase family. Long subfamily. The cofactor is Mg(2+).

It is found in the cytoplasm. It carries out the reaction 1-(5-phospho-beta-D-ribosyl)-ATP + diphosphate = 5-phospho-alpha-D-ribose 1-diphosphate + ATP. The protein operates within amino-acid biosynthesis; L-histidine biosynthesis; L-histidine from 5-phospho-alpha-D-ribose 1-diphosphate: step 1/9. Its activity is regulated as follows. Feedback inhibited by histidine. Functionally, catalyzes the condensation of ATP and 5-phosphoribose 1-diphosphate to form N'-(5'-phosphoribosyl)-ATP (PR-ATP). Has a crucial role in the pathway because the rate of histidine biosynthesis seems to be controlled primarily by regulation of HisG enzymatic activity. The sequence is that of ATP phosphoribosyltransferase from Shewanella halifaxensis (strain HAW-EB4).